The sequence spans 468 residues: Heparan-sulfate 6-O-sulfotransferase 2 (468 aa).

Over 1-9 (MDGKSNYSR) the chain is Cytoplasmic. Residues 10–30 (LLIALLMILFFGGIVLQYICS) form a helical; Signal-anchor for type II membrane protein membrane-spanning segment. The Lumenal segment spans residues 31-468 (TSDWQLLHLA…DYLENVEQWR (438 aa)). Asparagine 79 carries an N-linked (GlcNAc...) asparagine glycan. Position 103 to 111 (103 to 111 (HIQKTGGTT)) interacts with 3'-phosphoadenylyl sulfate. Residues 133-134 (KK), arginine 150, tryptophan 155, and histidine 160 contribute to the substrate site. Histidine 160 serves as the catalytic Proton acceptor. 3'-phosphoadenylyl sulfate-binding residues include arginine 197 and serine 205. Residues histidine 209 and tryptophan 216 each coordinate substrate. Asparagine 276 carries an N-linked (GlcNAc...) asparagine glycan. 329-331 (TQL) provides a ligand contact to 3'-phosphoadenylyl sulfate. An N-linked (GlcNAc...) asparagine glycan is attached at asparagine 332. Residue 335-336 (RA) coordinates 3'-phosphoadenylyl sulfate. The tract at residues 409 to 447 (FKPTKEPPMTEQSPAFAEEKQADAERTLESETEGQVEEN) is disordered. The span at 425–437 (AEEKQADAERTLE) shows a compositional bias: basic and acidic residues. Residues 438–447 (SETEGQVEEN) are compositionally biased toward acidic residues.

This sequence belongs to the sulfotransferase 6 family. In terms of tissue distribution, expressed ubiquitously during gastrulation. During early somitogenesis, strong expression in head and presumptive brain. During mid-somitogenesis, strong expression in eye, hindbrain and somitic boundaries and weak expression in tail bud. During late somitogenesis, strong expression in eye, hindbrain, branchial arch primordia, spinal cord and ventral medial somites. At 24 hours post-fertilization (hpf), strong expression throughout the head, with expression receeding from the trunk spinal cord, ventral medial somites and somitic boundaries; expressed in cells surrounding vascular structures of the dorsal aorta and caudal vein in the tail. At 36 hpf, expressed in lens, optic stalk, hindbrain and pectoral fin. At 48 hpf, expressed in eye, brain, otic vesicle and branchial arches.

The protein localises to the membrane. It carries out the reaction alpha-D-glucosaminyl-[heparan sulfate](n) + 3'-phosphoadenylyl sulfate = 6-sulfo-alpha-D-glucosaminyl-[heparan sulfate](n) + adenosine 3',5'-bisphosphate + H(+). Functionally, 6-O-sulfation enzyme which catalyzes the transfer of sulfate from 3'-phosphoadenosine 5'-phosphosulfate (PAPS) to position 6 of the N-sulfoglucosamine residue (GlcNS) of heparan sulfate. Required for muscle development and angiogenesis. The polypeptide is Heparan-sulfate 6-O-sulfotransferase 2 (hs6st2) (Danio rerio (Zebrafish)).